Reading from the N-terminus, the 341-residue chain is Protein arginine N-methyltransferase 1 (341 aa).

Positions 20–315 (ADYYFDSYSH…DCAPFDKNQR (296 aa)) constitute an SAM-dependent MTase PRMT-type domain. S-adenosyl-L-methionine contacts are provided by histidine 33, arginine 42, glycine 66, aspartate 88, and glutamate 117. Catalysis depends on residues glutamate 132 and glutamate 141.

Belongs to the class I-like SAM-binding methyltransferase superfamily. Protein arginine N-methyltransferase family.

The protein localises to the nucleus. Its subcellular location is the cytoplasm. It is found in the cytosol. The enzyme catalyses L-arginyl-[protein] + 2 S-adenosyl-L-methionine = N(omega),N(omega)-dimethyl-L-arginyl-[protein] + 2 S-adenosyl-L-homocysteine + 2 H(+). The catalysed reaction is L-arginyl-[protein] + S-adenosyl-L-methionine = N(omega)-methyl-L-arginyl-[protein] + S-adenosyl-L-homocysteine + H(+). Its function is as follows. Arginine methyltransferase that methylates the guanidino nitrogens of arginyl residues present in proteins such as ribonucleoproteins and histones. This is Protein arginine N-methyltransferase 1 (prmt1) from Dictyostelium discoideum (Social amoeba).